The chain runs to 1022 residues: ATPase MORC2B (1022 aa).

Alanine 2 carries the post-translational modification N-acetylalanine. Residues asparagine 39, 87 to 89 (SAK), and 99 to 105 (RYGNGLK) each bind ATP. Asparagine 39 contributes to the Mg(2+) binding site. Positions 285–362 (KTRAEQEVKK…RDAKQQALKE (78 aa)) form a coiled coil. An ATP-binding site is contributed by lysine 427. The segment at 490–544 (AMQVPTTIQCDLCLKWRTLPFQLSAVEEGYPINWVCSMNPDPEQDQCEAFELKQK) adopts a CW-type zinc-finger fold. Zn(2+) contacts are provided by cysteine 499, cysteine 502, cysteine 525, and cysteine 536. Residues 555 to 583 (KTQEERQKQLTEKIQQEQRKLKALKKIKP) adopt a coiled-coil conformation. Serine 615 carries the post-translational modification Phosphoserine. Residue lysine 649 forms a Glycyl lysine isopeptide (Lys-Gly) (interchain with G-Cter in SUMO2) linkage. A phosphoserine mark is found at serine 690, serine 724, serine 733, and serine 737. Lysine 758 is covalently cross-linked (Glycyl lysine isopeptide (Lys-Gly) (interchain with G-Cter in SUMO2)). Phosphoserine is present on residues serine 768 and serine 770. Threonine 827 is modified (phosphothreonine). 2 positions are modified to phosphoserine: serine 846 and serine 851. Lysine 922 is covalently cross-linked (Glycyl lysine isopeptide (Lys-Gly) (interchain with G-Cter in SUMO2)). A coiled-coil region spans residues 962–1001 (QAKVSEESLRISQKKLQETEEKLQKLRTNIQTLLQMAQQG).

As to quaternary structure, interacts with Morc2a. Protein is abundant in testes but not detected in other adult tissues examined (at protein level). Detected in germ cells with a distinct developmental-specific expression pattern but not in somatic cells such as Sertoli cells.

The protein resides in the nucleus. The enzyme catalyses ATP + H2O = ADP + phosphate + H(+). Its function is as follows. Required for chromosomal synapsis and meiotic recombination in males and females. The polypeptide is ATPase MORC2B (Mus musculus (Mouse)).